A 233-amino-acid polypeptide reads, in one-letter code: MKLIVGLGNPGPKYAGHRHNIGFMALDRIAADHGFGAWKDKHQGSLSEGRFGSDRAVLLKPLTFMNNSGQSVQAAMRFYKLEPEDVIVLHDEIDLAPGKVKYKTGGGHAGHNGLRSIHAHIGPEYARVRLGVGHPGHKDRVPGYVLHDFAKADQDWLDDVLRGVSDGAPFLATTEAAKFSNAVALRVSPRRSGTGQKGKDKPPAPAKQQATATKAEPEPDTRSALQKLMERFK.

Tyrosine 14 contributes to the tRNA binding site. Histidine 19 functions as the Proton acceptor in the catalytic mechanism. Positions 64, 66, and 112 each coordinate tRNA. The disordered stretch occupies residues 187–233 (VSPRRSGTGQKGKDKPPAPAKQQATATKAEPEPDTRSALQKLMERFK).

The protein belongs to the PTH family. In terms of assembly, monomer.

It localises to the cytoplasm. It carries out the reaction an N-acyl-L-alpha-aminoacyl-tRNA + H2O = an N-acyl-L-amino acid + a tRNA + H(+). Its function is as follows. Hydrolyzes ribosome-free peptidyl-tRNAs (with 1 or more amino acids incorporated), which drop off the ribosome during protein synthesis, or as a result of ribosome stalling. Catalyzes the release of premature peptidyl moieties from peptidyl-tRNA molecules trapped in stalled 50S ribosomal subunits, and thus maintains levels of free tRNAs and 50S ribosomes. This chain is Peptidyl-tRNA hydrolase, found in Roseobacter denitrificans (strain ATCC 33942 / OCh 114) (Erythrobacter sp. (strain OCh 114)).